Here is a 3313-residue protein sequence, read N- to C-terminus: PHD finger protein rhinoceros (3313 aa).

Over residues 1 to 16 the composition is skewed to basic residues; it reads MSQRGKRGNQHHHQSH. Residues 1 to 136 form a disordered region; the sequence is MSQRGKRGNQ…QGASTSSSWQ (136 aa). 2 stretches are compositionally biased toward low complexity: residues 42–71 and 100–134; these read PPNG…ATGG and LGAA…TSSS. Residues 323 to 373 form a PHD-type 1 zinc finger; the sequence is NVICDVCRSPDSEEANEMVFCDNCNICVHQACYGITAIPSGQWLCRTCSMG. The C2HC pre-PHD-type zinc-finger motif lies at 375–409; it reads TPDCVLCPNKAGAMKSNKSGKHWAHVSCALWIPEV. A PHD-type 2; degenerate zinc finger spans residues 433–487; that stretch reads LVCVLCRKRVGSCIQCSKHSMSKGKKENAGGASGGGSASVTSSMHKANKYATGTG. Disordered regions lie at residues 453–526, 708–1076, 1107–1842, 1961–2033, 2104–2136, 2145–2164, 2219–2252, 2353–2374, 2398–2514, 2563–2587, 2647–2679, 2827–2871, 2888–2954, 2978–2998, 3017–3077, 3144–3233, and 3259–3313; these read MSKG…ARAQ, LQSG…TKAA, KEAK…PPSH, AQKE…TMGN, PVTA…RMQR, ARRS…PPAT, AAPQ…FNGG, PAYP…PAHP, VAAK…PPPM, TTRG…LHPV, ATGT…QPPA, SCGL…SSSR, LAGA…IKIR, YEMT…YSTP, DFDK…SATT, KAEK…SLPE, and YENS…CEVR. The span at 512 to 526 shows a compositional bias: basic and acidic residues; it reads KNDMTSEERNQARAQ. Residues 735–749 are compositionally biased toward polar residues; sequence KKLNNGAITSRTSSP. Low complexity predominate over residues 760-772; that stretch reads STSTSTATATTAA. Residues 792–802 are compositionally biased toward polar residues; it reads GAATGTSTHNK. Low complexity-rich tracts occupy residues 803 to 861 and 894 to 912; these read TQSQ…ASGI and EAAA…ATSS. Residues 919 to 934 are compositionally biased toward basic and acidic residues; that stretch reads QQRRRQEPERERDGRG. Polar residues predominate over residues 942 to 955; sequence TVPNRTQPTKSKQS. Residues 956–972 are compositionally biased toward low complexity; that stretch reads TQADAGSGAGTGAAVET. The segment covering 994–1003 has biased composition (acidic residues); that stretch reads ESLSSDESEE. Low complexity predominate over residues 1015–1025; sequence AALSSGLAASG. Over residues 1058 to 1072 the composition is skewed to polar residues; it reads VESNVSDSQNQQTIR. Composition is skewed to basic and acidic residues over residues 1159 to 1168 and 1178 to 1205; these read AADRMREPES and KLKD…KEQS. Low complexity predominate over residues 1250 to 1266; sequence EAKSTAPAAKPTAAKTS. Polar residues predominate over residues 1285 to 1301; that stretch reads LKSSKPLQDTTFSTANE. Composition is skewed to low complexity over residues 1308 to 1324, 1377 to 1404, and 1451 to 1464; these read AATT…GVAT, SSSS…SGSD, and PAAS…AAAT. Positions 1475–1485 are enriched in polar residues; sequence TARTRQNSTNK. The segment covering 1551 to 1579 has biased composition (basic and acidic residues); that stretch reads SPEKQTARRKSRADESPKKIPNLEHEINQ. Residues 1638 to 1650 are compositionally biased toward acidic residues; it reads PVVEPEVETEIEP. Residues 1667 to 1678 show a composition bias toward polar residues; it reads TAPTHTQLSANA. Residues 1691 to 1702 are compositionally biased toward pro residues; that stretch reads PAAPLPASPTPT. Residues 1722-1734 show a composition bias toward basic residues; it reads SRWRSRRRRRRRS. Positions 1744-1773 form a coiled coil; sequence HTQHLLNEMEMARELEEERKNELLANASKY. The span at 1753–1765 shows a compositional bias: basic and acidic residues; that stretch reads EMARELEEERKNE. 2 stretches are compositionally biased toward polar residues: residues 1771–1781 and 1796–1805; these read SKYSASTSSPA and DSNSANSGGD. A compositionally biased stretch (low complexity) spans 1806-1819; the sequence is QQQQQQQQPLPQQL. A compositionally biased stretch (polar residues) spans 1823 to 1832; the sequence is SPSSEVASTI. A compositionally biased stretch (low complexity) spans 1965 to 1984; that stretch reads QQQQQQQQQQQQQQQQQQQQ. 2 stretches are compositionally biased toward polar residues: residues 1985-1999 and 2007-2018; these read SCLY…SVAS and MTANSGSYANSL. Over residues 2019 to 2033 the composition is skewed to low complexity; the sequence is TNTPNATPTNATMGN. Polar residues predominate over residues 2106 to 2118; that stretch reads TAQSGAGSNSNKL. 2 stretches are compositionally biased toward low complexity: residues 2148-2157 and 2222-2242; these read SSSPSSVSES and QQQT…QQQQ. Residues 2439 to 2451 are compositionally biased toward pro residues; sequence PVQPQPPTPPAPA. A compositionally biased stretch (gly residues) spans 2479 to 2488; the sequence is GSGGSGAPGR. Low complexity predominate over residues 2658–2679; that stretch reads PAVSAAPVAPAPAPAANSQPPA. Over residues 2891–2900 the composition is skewed to gly residues; sequence ASGGGAGTAS. The span at 2909-2924 shows a compositional bias: polar residues; the sequence is CSSGSNNDNNGKTGAA. The span at 2935-2946 shows a compositional bias: basic and acidic residues; the sequence is KTLESSEDDHQT. Over residues 3017–3026 the composition is skewed to basic and acidic residues; sequence DFDKGEENNK. Residues 3046-3065 show a composition bias toward basic residues; that stretch reads KRPKSSKPKKDKKEKKRQKQ. Over residues 3179-3198 the composition is skewed to polar residues; that stretch reads TSPQGLLLNSFTPHSQNANA. Residues 3268-3290 are compositionally biased toward low complexity; sequence SASGTGSASSNSCNSNSNNNNNN. Residues 3291-3302 are compositionally biased toward gly residues; that stretch reads GSGGGAASGGGS.

The protein belongs to the JADE family.

The protein resides in the nucleus. Its function is as follows. May function as a negative regulator of the EGFR/Ras/MAPK signaling pathway during eye development. The protein is PHD finger protein rhinoceros (rno) of Drosophila pseudoobscura pseudoobscura (Fruit fly).